We begin with the raw amino-acid sequence, 340 residues long: DNA-directed RNA polymerase subunit alpha (340 aa).

The alpha N-terminal domain (alpha-NTD) stretch occupies residues 1–238 (MADTFVAKNW…EQLTVFVNFD (238 aa)). The segment at 253-340 (AKLNENLFRS…QAPAPAQPKA (88 aa)) is alpha C-terminal domain (alpha-CTD).

The protein belongs to the RNA polymerase alpha chain family. As to quaternary structure, homodimer. The RNAP catalytic core consists of 2 alpha, 1 beta, 1 beta' and 1 omega subunit. When a sigma factor is associated with the core the holoenzyme is formed, which can initiate transcription.

It catalyses the reaction RNA(n) + a ribonucleoside 5'-triphosphate = RNA(n+1) + diphosphate. Its function is as follows. DNA-dependent RNA polymerase catalyzes the transcription of DNA into RNA using the four ribonucleoside triphosphates as substrates. This Myxococcus xanthus (strain DK1622) protein is DNA-directed RNA polymerase subunit alpha.